The following is a 317-amino-acid chain: Pseudouridine-5'-phosphate glycosidase (317 aa).

Glu-27 functions as the Proton donor in the catalytic mechanism. Substrate-binding residues include Lys-89 and Val-109. Asp-141 is a Mn(2+) binding site. Residue 143-145 (SAD) coordinates substrate. Lys-162 serves as the catalytic Nucleophile.

It belongs to the pseudouridine-5'-phosphate glycosidase family. In terms of assembly, homotrimer. Mn(2+) is required as a cofactor.

It catalyses the reaction D-ribose 5-phosphate + uracil = psi-UMP + H2O. Its function is as follows. Catalyzes the reversible cleavage of pseudouridine 5'-phosphate (PsiMP) to ribose 5-phosphate and uracil. Functions biologically in the cleavage direction, as part of a pseudouridine degradation pathway. The sequence is that of Pseudouridine-5'-phosphate glycosidase from Sorangium cellulosum (strain So ce56) (Polyangium cellulosum (strain So ce56)).